The following is a 442-amino-acid chain: Ribosomal protein uS12 methylthiotransferase RimO (442 aa).

Residues 9-119 enclose the MTTase N-terminal domain; sequence PRIGFVSLGC…VLSHVHQYVP (111 aa). Positions 18, 54, 83, 151, 155, and 158 each coordinate [4Fe-4S] cluster. One can recognise a Radical SAM core domain in the interval 137–375; it reads LTPRHYAYLK…QLQQAISTQR (239 aa). One can recognise a TRAM domain in the interval 377–442; the sequence is QDKIGREVLV…DEYDLWGSRV (66 aa).

Belongs to the methylthiotransferase family. RimO subfamily. The cofactor is [4Fe-4S] cluster.

It is found in the cytoplasm. It catalyses the reaction L-aspartate(89)-[ribosomal protein uS12]-hydrogen + (sulfur carrier)-SH + AH2 + 2 S-adenosyl-L-methionine = 3-methylsulfanyl-L-aspartate(89)-[ribosomal protein uS12]-hydrogen + (sulfur carrier)-H + 5'-deoxyadenosine + L-methionine + A + S-adenosyl-L-homocysteine + 2 H(+). Functionally, catalyzes the methylthiolation of an aspartic acid residue of ribosomal protein uS12. This is Ribosomal protein uS12 methylthiotransferase RimO from Pectobacterium atrosepticum (strain SCRI 1043 / ATCC BAA-672) (Erwinia carotovora subsp. atroseptica).